Consider the following 220-residue polypeptide: Ribosome assembly protein 3 (220 aa).

The segment at 1–91 (MSAGDISAIN…VSDVELTDEE (91 aa)) is disordered. Residues 13–24 (SVKKNRRRKKRR) show a composition bias toward basic residues. Residues 29-39 (SSSDSSSSDPS) are compositionally biased toward low complexity. Residues 41-72 (ESEKEEIQNGAIEEHVGENGKSDHVFSKGNDE) show a composition bias toward basic and acidic residues. Residues 73–91 (DKQEDIAIEVSDVELTDEE) show a composition bias toward acidic residues. A Phosphoserine modification is found at Ser-83. Thr-88 is subject to Phosphothreonine. Ser-99 is modified (phosphoserine).

The protein belongs to the RSA3 family. Associates with nucleolar pre-ribosomal particles. Interacts with DBP6. Together with DBP6, NOP8, URB1 and URB2, forms an RNA-independent complex, which is required during early maturation of nascent 60S ribosomal subunits.

It localises to the nucleus. The protein localises to the nucleolus. Functionally, required for efficient biogenesis of the 60S ribosomal subunit. This is Ribosome assembly protein 3 (RSA3) from Saccharomyces cerevisiae (strain ATCC 204508 / S288c) (Baker's yeast).